A 213-amino-acid polypeptide reads, in one-letter code: MVSLHPLLDNGITPGSDSFPGGTLKCLCPSFPVEITLTTNVAHNHACGCSKCWKPAGALFSIVGVVPRDELSVTANGDKLAIVDESAVIQRYACKECGTHLYRRIEKEHPFYGLDFVHAELSEEEGWQEPQFAAFVSSVIEQGFDPAKIGEVRARFRELGLETYDSLSPPLMDAIAAWTGRKNGKYDLHSWLDCERRKGGGGGGQPGGVVCRL.

The 147-residue stretch at 19–165 (FPGGTLKCLC…FRELGLETYD (147 aa)) folds into the CENP-V/GFA domain. Cysteine 26, cysteine 28, cysteine 47, cysteine 49, cysteine 52, cysteine 94, and cysteine 97 together coordinate Zn(2+).

Belongs to the Gfa family. Zn(2+) serves as cofactor.

It catalyses the reaction S-(hydroxymethyl)glutathione = glutathione + formaldehyde. It functions in the pathway one-carbon metabolism; formaldehyde degradation; formate from formaldehyde (glutathione route): step 1/3. In terms of biological role, catalyzes the condensation of formaldehyde and glutathione to S-hydroxymethylglutathione. The sequence is that of Putative glutathione-dependent formaldehyde-activating enzyme from Podospora anserina (strain S / ATCC MYA-4624 / DSM 980 / FGSC 10383) (Pleurage anserina).